A 340-amino-acid chain; its full sequence is Probable quinone oxidoreductase (340 aa).

The protein belongs to the zinc-containing alcohol dehydrogenase family. Quinone oxidoreductase subfamily.

It carries out the reaction 2 a quinone + NADPH + H(+) = 2 a 1,4-benzosemiquinone + NADP(+). This is Probable quinone oxidoreductase from Leishmania amazonensis.